A 105-amino-acid chain; its full sequence is SH3 domain-binding glutamic acid-rich-like protein 2 (105 aa).

Residues 61–67 (KGNPLPP) carry the SH3-binding motif.

The protein belongs to the SH3BGR family.

The protein localises to the nucleus. In Danio rerio (Zebrafish), this protein is SH3 domain-binding glutamic acid-rich-like protein 2 (sh3bgrl2).